A 269-amino-acid polypeptide reads, in one-letter code: Tryptophan synthase alpha chain (269 aa).

Active-site proton acceptor residues include E49 and D60.

It belongs to the TrpA family. As to quaternary structure, tetramer of two alpha and two beta chains.

It carries out the reaction (1S,2R)-1-C-(indol-3-yl)glycerol 3-phosphate + L-serine = D-glyceraldehyde 3-phosphate + L-tryptophan + H2O. The protein operates within amino-acid biosynthesis; L-tryptophan biosynthesis; L-tryptophan from chorismate: step 5/5. The alpha subunit is responsible for the aldol cleavage of indoleglycerol phosphate to indole and glyceraldehyde 3-phosphate. The chain is Tryptophan synthase alpha chain from Pseudomonas putida (strain ATCC 700007 / DSM 6899 / JCM 31910 / BCRC 17059 / LMG 24140 / F1).